The following is a 134-amino-acid chain: Ribonuclease P protein component (134 aa).

It belongs to the RnpA family. Consists of a catalytic RNA component (M1 or rnpB) and a protein subunit.

It carries out the reaction Endonucleolytic cleavage of RNA, removing 5'-extranucleotides from tRNA precursor.. In terms of biological role, RNaseP catalyzes the removal of the 5'-leader sequence from pre-tRNA to produce the mature 5'-terminus. It can also cleave other RNA substrates such as 4.5S RNA. The protein component plays an auxiliary but essential role in vivo by binding to the 5'-leader sequence and broadening the substrate specificity of the ribozyme. The chain is Ribonuclease P protein component from Ectopseudomonas mendocina (strain ymp) (Pseudomonas mendocina).